Consider the following 222-residue polypeptide: ATP-dependent Clp protease proteolytic subunit 1 (222 aa).

Serine 121 (nucleophile) is an active-site residue. Histidine 146 is an active-site residue.

The protein belongs to the peptidase S14 family. Fourteen ClpP subunits assemble into 2 heptameric rings which stack back to back to give a disk-like structure with a central cavity, resembling the structure of eukaryotic proteasomes.

The protein resides in the cytoplasm. It catalyses the reaction Hydrolysis of proteins to small peptides in the presence of ATP and magnesium. alpha-casein is the usual test substrate. In the absence of ATP, only oligopeptides shorter than five residues are hydrolyzed (such as succinyl-Leu-Tyr-|-NHMec, and Leu-Tyr-Leu-|-Tyr-Trp, in which cleavage of the -Tyr-|-Leu- and -Tyr-|-Trp bonds also occurs).. In terms of biological role, cleaves peptides in various proteins in a process that requires ATP hydrolysis. Has a chymotrypsin-like activity. Plays a major role in the degradation of misfolded proteins. This Thermobifida fusca (strain YX) protein is ATP-dependent Clp protease proteolytic subunit 1.